Here is a 187-residue protein sequence, read N- to C-terminus: Ribosome-recycling factor (187 aa).

Belongs to the RRF family.

The protein resides in the cytoplasm. In terms of biological role, responsible for the release of ribosomes from messenger RNA at the termination of protein biosynthesis. May increase the efficiency of translation by recycling ribosomes from one round of translation to another. The polypeptide is Ribosome-recycling factor (Methylobacterium sp. (strain 4-46)).